The primary structure comprises 350 residues: Probable dual-specificity RNA methyltransferase RlmN (350 aa).

The active-site Proton acceptor is the glutamate 91. One can recognise a Radical SAM core domain in the interval 97 to 327 (YHHGNSVCIS…VTIRREMGRD (231 aa)). Cysteine 104 and cysteine 332 form a disulfide bridge. Residues cysteine 111, cysteine 115, and cysteine 118 each contribute to the [4Fe-4S] cluster site. Residues 158–159 (GE), serine 190, 213–215 (SLH), and asparagine 289 each bind S-adenosyl-L-methionine. Cysteine 332 functions as the S-methylcysteine intermediate in the catalytic mechanism.

This sequence belongs to the radical SAM superfamily. RlmN family. It depends on [4Fe-4S] cluster as a cofactor.

It is found in the cytoplasm. It catalyses the reaction adenosine(2503) in 23S rRNA + 2 reduced [2Fe-2S]-[ferredoxin] + 2 S-adenosyl-L-methionine = 2-methyladenosine(2503) in 23S rRNA + 5'-deoxyadenosine + L-methionine + 2 oxidized [2Fe-2S]-[ferredoxin] + S-adenosyl-L-homocysteine. It carries out the reaction adenosine(37) in tRNA + 2 reduced [2Fe-2S]-[ferredoxin] + 2 S-adenosyl-L-methionine = 2-methyladenosine(37) in tRNA + 5'-deoxyadenosine + L-methionine + 2 oxidized [2Fe-2S]-[ferredoxin] + S-adenosyl-L-homocysteine. Its function is as follows. Specifically methylates position 2 of adenine 2503 in 23S rRNA and position 2 of adenine 37 in tRNAs. This is Probable dual-specificity RNA methyltransferase RlmN from Lachnospira eligens (strain ATCC 27750 / DSM 3376 / VPI C15-48 / C15-B4) (Eubacterium eligens).